The following is a 414-amino-acid chain: WD repeat-containing protein jip5 (414 aa).

WD repeat units lie at residues 9-48 (PLSA…SDTD), 73-112 (RHKG…VENK), 118-159 (AKDG…SPVS), 222-263 (VSSV…DQDE), and 319-356 (DETE…DGMD). The segment at 39 to 65 (RLPSEESDTDGDGAESTSSSRNGKGHI) is disordered. The disordered stretch occupies residues 352 to 414 (SDGMDGDMAG…QDIMGFADID (63 aa)). The segment covering 369–383 (DSDDSDDGDDSDDSD) has biased composition (acidic residues).

This sequence belongs to the WD repeat WDR55 family.

It is found in the nucleus. It localises to the nucleolus. This Neosartorya fischeri (strain ATCC 1020 / DSM 3700 / CBS 544.65 / FGSC A1164 / JCM 1740 / NRRL 181 / WB 181) (Aspergillus fischerianus) protein is WD repeat-containing protein jip5 (jip5).